Reading from the N-terminus, the 453-residue chain is Putative sodium-coupled neutral amino acid transporter 11 (453 aa).

Residues 1–34 form a disordered region; the sequence is MSYQQPQLRGPLQRETDPSDRESLVSGHEHGGKS. Residues 12-32 are compositionally biased toward basic and acidic residues; it reads LQRETDPSDRESLVSGHEHGG. 11 helical membrane-spanning segments follow: residues 39–59, 66–86, 106–126, 152–172, 179–199, 222–242, 262–282, 299–319, 337–357, 359–379, and 399–419; these read AVFN…PYSM, LGIL…VLLI, GFPG…IAMI, FISR…PLSL, LGKI…VVVT, AIQA…CFLV, ILVS…TFTG, VTFG…IECF, VFHV…SLLI, CLGI…IFII, and MACV…VMAI.

This sequence belongs to the amino acid/polyamine transporter 2 family. In terms of tissue distribution, widely expressed.

The protein localises to the membrane. Putative sodium-dependent amino acid/proton antiporter. This is Putative sodium-coupled neutral amino acid transporter 11 (Slc38a11) from Rattus norvegicus (Rat).